A 126-amino-acid polypeptide reads, in one-letter code: Nucleoside diphosphate kinase B (126 aa).

ATP contacts are provided by lysine 6, phenylalanine 37, threonine 68, arginine 79, and asparagine 89. Histidine 92 (pros-phosphohistidine intermediate) is an active-site residue.

It belongs to the NDK family. Mg(2+) serves as cofactor.

The protein resides in the cytoplasm. It is found in the nucleus. Its subcellular location is the cell projection. The protein localises to the lamellipodium. It localises to the ruffle. The enzyme catalyses a 2'-deoxyribonucleoside 5'-diphosphate + ATP = a 2'-deoxyribonucleoside 5'-triphosphate + ADP. It carries out the reaction a ribonucleoside 5'-diphosphate + ATP = a ribonucleoside 5'-triphosphate + ADP. Major role in the synthesis of nucleoside triphosphates other than ATP. This Merluccius capensis (Shallow-water Cape hake) protein is Nucleoside diphosphate kinase B (nme2).